Here is a 219-residue protein sequence, read N- to C-terminus: Holliday junction branch migration complex subunit RuvA (219 aa).

A domain I region spans residues 1–71 (MISWIKGELV…EDSDMLFGFS (71 aa)). Positions 72–150 (TKDQRDFFIQ…NKEIEKENLN (79 aa)) are domain II. Positions 151-161 (INNFLEKNKDL) are flexible linker. The segment at 161–219 (LDSIFKDIDLTLQSLNYSKKEIKNLFPKLINNIKNSSLEKESISFENLLKEAMNYLDHK) is domain III.

This sequence belongs to the RuvA family. In terms of assembly, homotetramer. Forms an RuvA(8)-RuvB(12)-Holliday junction (HJ) complex. HJ DNA is sandwiched between 2 RuvA tetramers; dsDNA enters through RuvA and exits via RuvB. An RuvB hexamer assembles on each DNA strand where it exits the tetramer. Each RuvB hexamer is contacted by two RuvA subunits (via domain III) on 2 adjacent RuvB subunits; this complex drives branch migration. In the full resolvosome a probable DNA-RuvA(4)-RuvB(12)-RuvC(2) complex forms which resolves the HJ.

It localises to the cytoplasm. In terms of biological role, the RuvA-RuvB-RuvC complex processes Holliday junction (HJ) DNA during genetic recombination and DNA repair, while the RuvA-RuvB complex plays an important role in the rescue of blocked DNA replication forks via replication fork reversal (RFR). RuvA specifically binds to HJ cruciform DNA, conferring on it an open structure. The RuvB hexamer acts as an ATP-dependent pump, pulling dsDNA into and through the RuvAB complex. HJ branch migration allows RuvC to scan DNA until it finds its consensus sequence, where it cleaves and resolves the cruciform DNA. The protein is Holliday junction branch migration complex subunit RuvA of Prochlorococcus marinus subsp. pastoris (strain CCMP1986 / NIES-2087 / MED4).